A 200-amino-acid polypeptide reads, in one-letter code: Small ribosomal subunit protein eS1 (200 aa).

Belongs to the eukaryotic ribosomal protein eS1 family. In terms of assembly, part of the 30S ribosomal subunit.

In Thermococcus kodakarensis (strain ATCC BAA-918 / JCM 12380 / KOD1) (Pyrococcus kodakaraensis (strain KOD1)), this protein is Small ribosomal subunit protein eS1.